A 436-amino-acid polypeptide reads, in one-letter code: 4-hydroxyphenylpyruvate dioxygenase (436 aa).

VOC domains are found at residues 38 to 194 and 210 to 370; these read RFHH…GFEV and RLDH…IFTK. Residues histidine 213, histidine 295, and glutamate 381 each contribute to the Fe cation site.

This sequence belongs to the 4HPPD family. Fe cation serves as cofactor.

It is found in the cytoplasm. The catalysed reaction is 3-(4-hydroxyphenyl)pyruvate + O2 = homogentisate + CO2. It functions in the pathway amino-acid degradation; L-phenylalanine degradation; acetoacetate and fumarate from L-phenylalanine: step 3/6. It participates in cofactor biosynthesis; prenylquinone biosynthesis. This Plectranthus scutellarioides (Coleus) protein is 4-hydroxyphenylpyruvate dioxygenase.